Here is a 1829-residue protein sequence, read N- to C-terminus: Iron-regulated protein FrpC (1829 aa).

22 Hemolysin-type calcium-binding repeats span residues 869 to 886, 887 to 904, 1015 to 1032, 1033 to 1050, 1051 to 1068, 1069 to 1086, 1087 to 1104, 1215 to 1232, 1233 to 1250, 1251 to 1268, 1269 to 1286, 1287 to 1304, 1415 to 1432, 1433 to 1450, 1451 to 1468, 1469 to 1486, 1487 to 1504, 1615 to 1632, 1633 to 1650, 1651 to 1668, 1669 to 1686, and 1687 to 1704; these read FGHN…NDTL, IGGA…SDTY, NGGL…DDLL, NGDA…NDTL, NGGE…NDAL, NGGE…NDTL, DGGE…NDAL, and NGGE…NDVL.

The protein belongs to the RTX prokaryotic toxin (TC 1.C.11) family.

The protein resides in the cell outer membrane. It localises to the secreted. Functionally, may participate in the pathogenesis of meningococcal disease. The protein is Iron-regulated protein FrpC (frpC) of Neisseria meningitidis serogroup C.